Consider the following 1063-residue polypeptide: Structural polyprotein (1063 aa).

Residues 1–131 (MASTTPITME…LGPPTNPFQA (131 aa)) form a disordered region. The interval 30 to 69 (GASQSRRPRPPRQRDSSTSGDDSGRDSGGPRRRRGNRGRG) is human C1QBP/SF2P32-binding. Ser46 carries the phosphoserine; by host modification. The segment covering 70-87 (QLRDWSRAPPPPEERQES) has biased composition (basic and acidic residues). The span at 93 to 107 (APKPSRAPPQQPQPP) shows a compositional bias: pro residues. An intrachain disulfide couples Cys153 to Cys197. The tract at residues 279–300 (GAPQAFLAGLLLAAVAVGTARA) is functions as E2 signal peptide. The Extracellular segment spans residues 301–534 (GLQPRADMAA…LWLATANALS (234 aa)). N-linked (GlcNAc...) asparagine; by host glycosylation is found at Asn353, Asn371, Asn410, and Asn429. Residues 535–555 (LDHALAAFVLLVPWVLIFMVC) form a helical membrane-spanning segment. Residues 556–582 (RRACRRRGAAAALTAVVLQGYNPPAYG) lie on the Cytoplasmic side of the membrane. The interval 563-582 (GAAAALTAVVLQGYNPPAYG) is functions as E1 signal peptide. Residues 583–1028 (EEAFTYLCTA…QTWAEWAAAH (446 aa)) lie on the Extracellular side of the membrane. 8 cysteine pairs are disulfide-bonded: Cys590–Cys595, Cys619–Cys824, Cys641–Cys653, Cys699–Cys712, Cys758–Cys767, Cys807–Cys817, Cys931–Cys934, and Cys950–Cys983. A glycan (N-linked (GlcNAc...) asparagine; by host) is linked at Asn658. Ca(2+)-binding residues include Asn670 and Ala671. Positions 718 and 719 each coordinate Ca(2+). N-linked (GlcNAc...) asparagine; by host glycosylation is found at Asn759 and Asn791. Residues Thr1011 and Thr1012 are each glycosylated (O-linked (GalNAc...) threonine; by host). Residues 1029 to 1049 (WWQLTLGAICALLLAGLLACC) traverse the membrane as a helical segment. Residues 1050-1063 (AKCLYYLRGAIAPR) are Extracellular-facing.

Homodimer; further assembles into homooligomer. Interacts with human C1QBP. Interacts (via N-terminus) with protease/methyltransferase p150. As to quaternary structure, heterodimer with spike glycoprotein E2. In terms of assembly, heterodimer with spike glycoprotein E1. Structural polyprotein: Specific enzymatic cleavages in vivo yield mature proteins. Two signal peptidase-mediated cleavages within the polyprotein produce the structural proteins capsid, E2, and E1. The E2 signal peptide remains attached to the C-terminus of the capsid protein after cleavage by the signal peptidase. Another signal peptide at E2 C-terminus directs E1 to the ER, with a similar mechanism. Post-translationally, contains three N-linked oligosaccharides. In terms of processing, capsid is phosphorylated on Ser-46 by host. This phosphorylation negatively regulates capsid protein RNA-binding activity. Dephosphorylated by human PP1A.

It is found in the virion. Its subcellular location is the host cytoplasm. The protein localises to the host mitochondrion. The protein resides in the virion membrane. It localises to the host Golgi apparatus membrane. In terms of biological role, capsid protein interacts with genomic RNA and assembles into icosahedric core particles 65-70 nm in diameter. The resulting nucleocapsid eventually associates with the cytoplasmic domain of E2 at the cell membrane, leading to budding and formation of mature virions from host Golgi membranes. Phosphorylation negatively regulates RNA-binding activity, possibly delaying virion assembly during the viral replication phase. Capsid protein dimerizes and becomes disulfide-linked in the virion. Modulates genomic RNA replication. Modulates subgenomic RNA synthesis by interacting with human C1QBP/SF2P32. Induces both perinuclear clustering of mitochondria and the formation of electron-dense intermitochondrial plaques, both hallmarks of rubella virus infected cells. Induces apoptosis when expressed in transfected cells. Responsible for viral attachment to target host cell, by binding to the cell receptor. Its transport to the plasma membrane depends on interaction with E1 protein. The surface glycoproteins display an irregular helical organization and a pseudo-tetrameric inner nucleocapsid arrangement. Functionally, class II viral fusion protein. Fusion activity is inactive as long as E1 is bound to E2 in mature virion. After virus attachment to target cell and clathrin-mediated endocytosis, acidification of the endosome would induce dissociation of E1/E2 heterodimer and concomitant trimerization of the E1 subunits. This E1 homotrimer is fusion active, and promotes release of viral nucleocapsid in cytoplasm after endosome and viral membrane fusion. The cytoplasmic tail of spike glycoprotein E1 modulates virus release. The surface glycoproteins display an irregular helical organization and a pseudo-tetrameric inner nucleocapsid arrangement. The sequence is that of Structural polyprotein from Rubella virus (strain TO-336 vaccine) (RUBV).